Consider the following 139-residue polypeptide: Diuretic hormone 41 (139 aa).

The first 20 residues, 1–20 (MMWWALWCAVVVAAGSGVAA), serve as a signal peptide directing secretion. A propeptide spanning residues 21-79 (APAPDSLSPLDMVQMDSSAPDDETLYAMSPMAARYSAGAPWLYLLADMPRDSQTGSGRV) is cleaved from the precursor. Residue Ile-122 is modified to Isoleucine amide.

The protein belongs to the sauvagine/corticotropin-releasing factor/urotensin I family. Expressed in corpora cardiaca (CC), corpora allata (CA), antennal lobe (AL) and gnathal ganglion (GNG) (at protein level). Expression in CC and CA detected in all animals, in GNG in most animals, expression in AL detected in few animals (at protein level).

It is found in the secreted. Functionally, regulation of fluid secretion. This is Diuretic hormone 41 from Agrotis ipsilon (Black cutworm moth).